The chain runs to 379 residues: Alkanesulfonate monooxygenase (379 aa).

It belongs to the SsuD family.

The catalysed reaction is an alkanesulfonate + FMNH2 + O2 = an aldehyde + FMN + sulfite + H2O + 2 H(+). In terms of biological role, catalyzes the desulfonation of aliphatic sulfonates. The protein is Alkanesulfonate monooxygenase of Pseudomonas syringae pv. syringae (strain B728a).